The chain runs to 762 residues: Endonuclease MutS2 (762 aa).

An ATP-binding site is contributed by 329 to 336 (GPNTGGKT). One can recognise a Smr domain in the interval 682–757 (LNLIGKDVET…GSGVTVVYLE (76 aa)).

It belongs to the DNA mismatch repair MutS family. MutS2 subfamily. Homodimer. Binds to stalled ribosomes, contacting rRNA.

In terms of biological role, endonuclease that is involved in the suppression of homologous recombination and thus may have a key role in the control of bacterial genetic diversity. Its function is as follows. Acts as a ribosome collision sensor, splitting the ribosome into its 2 subunits. Detects stalled/collided 70S ribosomes which it binds and splits by an ATP-hydrolysis driven conformational change. Acts upstream of the ribosome quality control system (RQC), a ribosome-associated complex that mediates the extraction of incompletely synthesized nascent chains from stalled ribosomes and their subsequent degradation. Probably generates substrates for RQC. This is Endonuclease MutS2 from Aquifex aeolicus (strain VF5).